Consider the following 156-residue polypeptide: 6,7-dimethyl-8-ribityllumazine synthase (156 aa).

Residues W28, 60–62 (SFE), and 82–84 (VVV) contribute to the 5-amino-6-(D-ribitylamino)uracil site. Residue 87 to 88 (GT) participates in (2S)-2-hydroxy-3-oxobutyl phosphate binding. The active-site Proton donor is H90. F115 is a binding site for 5-amino-6-(D-ribitylamino)uracil. R129 lines the (2S)-2-hydroxy-3-oxobutyl phosphate pocket.

This sequence belongs to the DMRL synthase family.

It catalyses the reaction (2S)-2-hydroxy-3-oxobutyl phosphate + 5-amino-6-(D-ribitylamino)uracil = 6,7-dimethyl-8-(1-D-ribityl)lumazine + phosphate + 2 H2O + H(+). Its pathway is cofactor biosynthesis; riboflavin biosynthesis; riboflavin from 2-hydroxy-3-oxobutyl phosphate and 5-amino-6-(D-ribitylamino)uracil: step 1/2. Functionally, catalyzes the formation of 6,7-dimethyl-8-ribityllumazine by condensation of 5-amino-6-(D-ribitylamino)uracil with 3,4-dihydroxy-2-butanone 4-phosphate. This is the penultimate step in the biosynthesis of riboflavin. The polypeptide is 6,7-dimethyl-8-ribityllumazine synthase (Kocuria rhizophila (strain ATCC 9341 / DSM 348 / NBRC 103217 / DC2201)).